The primary structure comprises 272 residues: MTVSAAVQQQAGEAGLLPSHQARLDYRTGKGWSTAGVANGFVQGNLAIIPEQYAGAFHRFCQLNPKPCPIIGMSDPGNPFIPALGADLDIRTDVPRYRVWRDGEMVEEPTDLLAHWLDDLVTFVLGCSFSFEEALMADGLPIRHIEQGCRVPMYRTNIACTPSGPFAGPMVVSMRPFKPAQAIRAVQITTRFPAVHGAPVHLGHPDQIGIVDINKPDYGDPVPVAADEIPVFWACGVTPQAVISAAKLPFAITHAPGLMLITDLKNKDLAVL.

The protein belongs to the D-glutamate cyclase family.

In Bradyrhizobium sp. (strain BTAi1 / ATCC BAA-1182), this protein is Putative hydro-lyase BBta_2883.